Here is an 869-residue protein sequence, read N- to C-terminus: MSDASTPLMRQYNSIKEQVPNALLMFRLGDFYELFFEDAVTAARELEITLTARNKEKGNAIPMCGVPYHAAEGYISRLIQKGFRVAICDQVEDAKLAKKLVRREITRVVTPGTAMDSNLVRSRENNFLAAVGRSGSRSAVAHVDVSTGEFRVTEMEPEEVAGALEHLGAREVLFPGDLPLLTGEDRSGLRFVRTELEDWVFTHDYSDRTLRDHFKLLSLDGCGLANRAAAIGAAGAILHYLRDTQRAALDHLDRPTYYDRADSMVLDSVTVRNLELIEPLFAADAGGIHAQPTVLGVLDQTLTGMGGRLLRQRLLRPSMNRAEIEQRLDAVGELQQQTILRAELRKQLSGILDLERLLAKVTLGSAGPRDVLALGRSLEKIPALKRCFDTQQAARLRNLHDRLDELADVASLILDCISDEPPLNLVDGGTIRAGFHPELDELRDLSQNGKQYIAQIEARERQRTGIGSLKVRFNNVFGYYIEITRANQHLAPADYERKQTLANAERFTTPELKDYERKVLDAEDKILTLEKELFSDVRKRAAAHAQRIRAAAAAVAELDVTASLAQVAAENRYQRPCFSDSGEMRIMAGRHPVIERLTEQEAGRFIPNDLYLNDSTDLLAIITGPNMGGKSTYLRQAALIAILAQIGSFVPAESASLPVIDRIFTRIGASDNLARGRSTFMVEMTETAVILNTATPRSFIVLDEVGRGTATYDGLALAWAVVEYIHQRTRAKTLFATHYHELTELAEQLSGVRNLMVSVKEAGDHIIFLRKVEPGKADRSYGIEVARLAGLPISVIERARDVLKLHERTEHAVSGELVKSEDHGPVQIQMFEPVGYGIAERIRAINVDELRPIEALQLLSELQKELKRS.

624-631 (GPNMGGKS) provides a ligand contact to ATP.

The protein belongs to the DNA mismatch repair MutS family.

This protein is involved in the repair of mismatches in DNA. It is possible that it carries out the mismatch recognition step. This protein has a weak ATPase activity. The chain is DNA mismatch repair protein MutS from Solibacter usitatus (strain Ellin6076).